The sequence spans 464 residues: Glutamate--tRNA ligase (464 aa).

Residues P9 to G19 carry the 'HIGH' region motif. The 'KMSKS' region signature appears at K242–R246. K245 contacts ATP.

This sequence belongs to the class-I aminoacyl-tRNA synthetase family. Glutamate--tRNA ligase type 1 subfamily. As to quaternary structure, monomer.

It localises to the cytoplasm. It carries out the reaction tRNA(Glu) + L-glutamate + ATP = L-glutamyl-tRNA(Glu) + AMP + diphosphate. Functionally, catalyzes the attachment of glutamate to tRNA(Glu) in a two-step reaction: glutamate is first activated by ATP to form Glu-AMP and then transferred to the acceptor end of tRNA(Glu). This chain is Glutamate--tRNA ligase, found in Neisseria meningitidis serogroup C / serotype 2a (strain ATCC 700532 / DSM 15464 / FAM18).